Reading from the N-terminus, the 170-residue chain is Large ribosomal subunit protein uL18c (170 aa).

The N-terminal 63 residues, 1–63 (MLASPALAGA…QADRIARHVR (63 aa)), are a transit peptide targeting the chloroplast.

The protein belongs to the universal ribosomal protein uL18 family. Part of the 50S ribosomal subunit; contacts the 5S rRNA.

Its subcellular location is the plastid. The protein resides in the chloroplast. Functionally, binds 5S rRNA, forms part of the central protuberance of the 50S subunit. This chain is Large ribosomal subunit protein uL18c (RPL18), found in Oryza sativa subsp. japonica (Rice).